The chain runs to 106 residues: Large ribosomal subunit protein eL42 (106 aa).

It belongs to the eukaryotic ribosomal protein eL42 family. Component of the large ribosomal subunit.

Its subcellular location is the cytoplasm. Functionally, component of the large ribosomal subunit. The ribosome is a large ribonucleoprotein complex responsible for the synthesis of proteins in the cell. In Papio anubis (Olive baboon), this protein is Large ribosomal subunit protein eL42 (RPL36A).